A 439-amino-acid polypeptide reads, in one-letter code: Arginine biosynthesis bifunctional protein ArgJ, mitochondrial (439 aa).

Residues Thr175, Lys201, Thr212, Glu301, Asn434, and Ser439 each contribute to the substrate site. The Nucleophile role is filled by Thr212.

This sequence belongs to the ArgJ family. In terms of assembly, heterodimer of an alpha and a beta chain. The alpha and beta chains are autoproteolytically processed from a single precursor protein within the mitochondrion.

It localises to the mitochondrion matrix. It catalyses the reaction N(2)-acetyl-L-ornithine + L-glutamate = N-acetyl-L-glutamate + L-ornithine. It carries out the reaction L-glutamate + acetyl-CoA = N-acetyl-L-glutamate + CoA + H(+). It functions in the pathway amino-acid biosynthesis; L-arginine biosynthesis; L-ornithine and N-acetyl-L-glutamate from L-glutamate and N(2)-acetyl-L-ornithine (cyclic): step 1/1. The protein operates within amino-acid biosynthesis; L-arginine biosynthesis; N(2)-acetyl-L-ornithine from L-glutamate: step 1/4. Functionally, catalyzes two activities which are involved in the cyclic version of arginine biosynthesis: the synthesis of acetylglutamate from glutamate and acetyl-CoA, and of ornithine by transacetylation between acetylornithine and glutamate. This is Arginine biosynthesis bifunctional protein ArgJ, mitochondrial from Candida albicans (strain WO-1) (Yeast).